The primary structure comprises 176 residues: Gamma-crystallin M2 (176 aa).

Beta/gamma crystallin 'Greek key' domains follow at residues 2 to 40 and 41 to 83; these read GKVI…RVEG and GCWV…RIIP. The tract at residues 84–88 is connecting peptide; that stretch reads QYRGS. 2 consecutive Beta/gamma crystallin 'Greek key' domains span residues 89–129 and 130–172; these read YRMR…HVMD and GYWI…RRIM.

Belongs to the beta/gamma-crystallin family. Monomer.

Crystallins are the dominant structural components of the vertebrate eye lens. The polypeptide is Gamma-crystallin M2 (GM2) (Chiloscyllium indicum (Slender bamboo shark)).